The primary structure comprises 568 residues: Sphingosine-1-phosphate lyase 1 (568 aa).

The Lumenal portion of the chain corresponds to 1–41; sequence MPSTDLLTLKAFEPYLEILEVYSTKAKNYVNGHCTKYEPWQ. The chain crosses the membrane as a helical; Signal-anchor for type III membrane protein span at residues 42–62; that stretch reads LIAWSVVWTLLIVWGYEFVFQ. The Cytoplasmic segment spans residues 63 to 568; sequence PESLWSRFKK…SQMNGSPKPH (506 aa). An N6-(pyridoxal phosphate)lysine; alternate modification is found at Lys-353. Lys-353 is modified (N6-acetyllysine; alternate). 2 positions are modified to 3'-nitrotyrosine: Tyr-356 and Tyr-366. At Ser-564 the chain carries Phosphoserine.

It belongs to the group II decarboxylase family. Sphingosine-1-phosphate lyase subfamily. Homodimer. The cofactor is pyridoxal 5'-phosphate.

The protein resides in the endoplasmic reticulum membrane. The enzyme catalyses sphinganine 1-phosphate = hexadecanal + phosphoethanolamine. It catalyses the reaction sphing-4-enine 1-phosphate = (2E)-hexadecenal + phosphoethanolamine. Its pathway is lipid metabolism; sphingolipid metabolism. Functionally, cleaves phosphorylated sphingoid bases (PSBs), such as sphingosine-1-phosphate, into fatty aldehydes and phosphoethanolamine. Elevates stress-induced ceramide production and apoptosis. Required for global lipid homeostasis in liver and cholesterol homeostasis in fibroblasts. Involved in the regulation of pro-inflammatory response and neutrophil trafficking. Modulates neuronal autophagy via phosphoethanolamine production which regulates accumulation of aggregate-prone proteins such as APP. Seems to play a role in establishing neuronal contact sites and axonal maintenance. The chain is Sphingosine-1-phosphate lyase 1 from Pongo abelii (Sumatran orangutan).